The primary structure comprises 231 residues: Ribonuclease HII (231 aa).

An RNase H type-2 domain is found at 38-227 (ELVAGGDEAG…IKSFYGQLKL (190 aa)). Asp-44, Glu-45, and Asp-136 together coordinate a divalent metal cation.

The protein belongs to the RNase HII family. Mn(2+) serves as cofactor. Mg(2+) is required as a cofactor.

It is found in the cytoplasm. It catalyses the reaction Endonucleolytic cleavage to 5'-phosphomonoester.. In terms of biological role, endonuclease that specifically degrades the RNA of RNA-DNA hybrids. This is Ribonuclease HII from Carboxydothermus hydrogenoformans (strain ATCC BAA-161 / DSM 6008 / Z-2901).